Reading from the N-terminus, the 503-residue chain is Sugar phosphate exchanger 3 (503 aa).

Residues 20-40 traverse the membrane as a helical segment; that stretch reads YTHHHLAAFLLTFFSYSLLHA. 2 N-linked (GlcNAc...) asparagine glycosylation sites follow: Asn62 and Asn71. Helical transmembrane passes span 87 to 107, 119 to 139, 152 to 172, 183 to 203, and 214 to 234; these read TLFL…GLFI, LVLT…GTLT, LVWI…VAIM, FVFG…AFLA, and AFLV…FGLV. An N-linked (GlcNAc...) asparagine glycan is attached at Asn275. 6 helical membrane passes run 300-322, 342-362, 367-387, 395-415, 437-457, and 466-486; these read GVLL…FFWL, IWYD…SDLM, PVLT…SHSP, FIMS…SSAI, GIVD…VPLI, and VFYF…PLIV.

Belongs to the major facilitator superfamily. Organophosphate:Pi antiporter (OPA) (TC 2.A.1.4) family.

It is found in the endoplasmic reticulum membrane. The protein resides in the lysosome membrane. Functionally, unlike the other SLC37 members, seems to lack glucose-6-phosphate antiporter activity. The protein is Sugar phosphate exchanger 3 (slc37a3) of Xenopus laevis (African clawed frog).